Reading from the N-terminus, the 274-residue chain is Penicillin-insensitive murein endopeptidase (274 aa).

Positions M1–A19 are cleaved as a signal peptide. 3 disulfides stabilise this stretch: C44-C265, C187-C235, and C216-C223. Zn(2+)-binding residues include H110, H113, D120, D147, and H150. The segment at D225–L274 is disordered.

It belongs to the peptidase M74 family. In terms of assembly, dimer. It depends on Zn(2+) as a cofactor.

The protein localises to the periplasm. Functionally, murein endopeptidase that cleaves the D-alanyl-meso-2,6-diamino-pimelyl amide bond that connects peptidoglycan strands. Likely plays a role in the removal of murein from the sacculus. The polypeptide is Penicillin-insensitive murein endopeptidase (Salmonella paratyphi A (strain ATCC 9150 / SARB42)).